The following is a 2856-amino-acid chain: Lipopolysaccharide-responsive and beige-like anchor protein (2856 aa).

Disordered stretches follow at residues Met1–Leu35 and Glu939–Tyr1107. Ala2 carries the N-acetylalanine modification. 3 positions are modified to phosphoserine: Ser10, Ser979, and Ser1003. The span at Glu991–Leu1009 shows a compositional bias: polar residues. A compositionally biased stretch (basic and acidic residues) spans Gln1010–Gln1026. The span at Ser1073–Pro1082 shows a compositional bias: low complexity. Ser1097, Ser1132, Ser1136, Ser1219, Ser1221, Ser1228, Ser1244, and Ser1258 each carry phosphoserine. The tract at residues Phe1253–Ser1296 is disordered. The segment covering Ser1274–Gly1283 has biased composition (polar residues). Residues Ser1298–Asp1340 form a WD 1 repeat. Phosphoserine occurs at positions 1487 and 1497. Residues Ala1529–Val1545 traverse the membrane as a helical segment. Disordered stretches follow at residues Asp1556–Gly1621 and Ser1750–Cys1778. The span at Leu1563 to Ala1573 shows a compositional bias: polar residues. Residues Ser1586–Ser1601 are compositionally biased toward low complexity. Phosphoserine is present on residues Ser1608, Ser1770, Ser1773, and Ser2057. Positions Asn2066–Pro2174 constitute a BEACH-type PH domain. Residues Ala2193 to Arg2482 form the BEACH domain. Phosphoserine is present on Ser2489. WD repeat units follow at residues Asp2584 to Val2626, Gly2629 to Gly2672, Gly2688 to Glu2728, Glu2770 to Ala2809, and Gly2812 to Glu2851.

In terms of assembly, interacts with TOM1 and TOLLIP. Isoform 1 is expressed in the brain, is absent from the lung and the bone marrow and is less abundant in the spleen. Isoform 2 is expressed in the spleen, lung, brain and bone marrow. Isoform 3 is expressed in the brain, is absent from the bone marrow and is less abundant in the spleen and lung.

It is found in the cell membrane. The protein localises to the endoplasmic reticulum membrane. Its subcellular location is the golgi apparatus. It localises to the trans-Golgi network membrane. The protein resides in the lysosome membrane. Involved in coupling signal transduction and vesicle trafficking to enable polarized secretion and/or membrane deposition of immune effector molecules. Involved in phagophore growth during mitophagy by regulating ATG9A trafficking to mitochondria. The polypeptide is Lipopolysaccharide-responsive and beige-like anchor protein (Lrba) (Mus musculus (Mouse)).